Consider the following 398-residue polypeptide: Phosphoglycerate kinase (398 aa).

Substrate contacts are provided by residues 20–22, arginine 35, 58–61, arginine 118, and arginine 155; these read DLN and HLGR. Residues lysine 206, glycine 295, glutamate 326, and 354–357 contribute to the ATP site; that span reads GGDS.

It belongs to the phosphoglycerate kinase family. As to quaternary structure, monomer.

It localises to the cytoplasm. The catalysed reaction is (2R)-3-phosphoglycerate + ATP = (2R)-3-phospho-glyceroyl phosphate + ADP. The protein operates within carbohydrate degradation; glycolysis; pyruvate from D-glyceraldehyde 3-phosphate: step 2/5. The polypeptide is Phosphoglycerate kinase (Onion yellows phytoplasma (strain OY-M)).